Reading from the N-terminus, the 396-residue chain is Ribosomal RNA large subunit methyltransferase I (396 aa).

Positions 2–81 constitute a PUA domain; the sequence is SVRLVLAKGR…ESIDIAFFTR (80 aa).

Belongs to the methyltransferase superfamily. RlmI family.

It localises to the cytoplasm. It carries out the reaction cytidine(1962) in 23S rRNA + S-adenosyl-L-methionine = 5-methylcytidine(1962) in 23S rRNA + S-adenosyl-L-homocysteine + H(+). In terms of biological role, specifically methylates the cytosine at position 1962 (m5C1962) of 23S rRNA. The protein is Ribosomal RNA large subunit methyltransferase I of Escherichia coli O1:K1 / APEC.